Consider the following 196-residue polypeptide: Molybdenum cofactor guanylyltransferase (196 aa).

GTP-binding positions include Leu10–Gly12, Lys23, Asn51, Asp69, and Asp99. Asp99 is a binding site for Mg(2+).

This sequence belongs to the MobA family. In terms of assembly, monomer. Requires Mg(2+) as cofactor.

The protein resides in the cytoplasm. The catalysed reaction is Mo-molybdopterin + GTP + H(+) = Mo-molybdopterin guanine dinucleotide + diphosphate. Its function is as follows. Transfers a GMP moiety from GTP to Mo-molybdopterin (Mo-MPT) cofactor (Moco or molybdenum cofactor) to form Mo-molybdopterin guanine dinucleotide (Mo-MGD) cofactor. This Shewanella sediminis (strain HAW-EB3) protein is Molybdenum cofactor guanylyltransferase.